The primary structure comprises 201 residues: FMN-dependent NADH:quinone oxidoreductase (201 aa).

Residues serine 10, 16–18, 96–99, and 140–143 contribute to the FMN site; these read SQS, MYNF, and SRGG.

This sequence belongs to the azoreductase type 1 family. In terms of assembly, homodimer. Requires FMN as cofactor.

The catalysed reaction is 2 a quinone + NADH + H(+) = 2 a 1,4-benzosemiquinone + NAD(+). It carries out the reaction N,N-dimethyl-1,4-phenylenediamine + anthranilate + 2 NAD(+) = 2-(4-dimethylaminophenyl)diazenylbenzoate + 2 NADH + 2 H(+). Its function is as follows. Quinone reductase that provides resistance to thiol-specific stress caused by electrophilic quinones. Functionally, also exhibits azoreductase activity. Catalyzes the reductive cleavage of the azo bond in aromatic azo compounds to the corresponding amines. The protein is FMN-dependent NADH:quinone oxidoreductase of Escherichia coli O9:H4 (strain HS).